A 1168-amino-acid chain; its full sequence is DNA-directed RNA polymerase subunit beta (1168 aa).

Belongs to the RNA polymerase beta chain family. As to quaternary structure, the RNAP catalytic core consists of 2 alpha, 1 beta, 1 beta' and 1 omega subunit. When a sigma factor is associated with the core the holoenzyme is formed, which can initiate transcription.

It catalyses the reaction RNA(n) + a ribonucleoside 5'-triphosphate = RNA(n+1) + diphosphate. DNA-dependent RNA polymerase catalyzes the transcription of DNA into RNA using the four ribonucleoside triphosphates as substrates. In Rhodococcus jostii (strain RHA1), this protein is DNA-directed RNA polymerase subunit beta.